We begin with the raw amino-acid sequence, 371 residues long: MSL complex subunit 3B (371 aa).

2 disordered regions span residues 1–47 (MATL…DERA) and 160–230 (EERA…PQAK). Basic and acidic residues predominate over residues 8–47 (PKDDGEGKDEGGSDRGDGDSKPKGKKEVEPHTRREADERA). The MRG domain occupies 44 to 367 (DERAMRIPIP…CEAHYSSKNP (324 aa)). Residues 183–193 (SESQAVAGPAA) show a composition bias toward low complexity. Over residues 206–216 (APRRSTRHSTH) the composition is skewed to basic residues.

The protein localises to the nucleus. Its function is as follows. Probable non-catalytic component of the MSL histone acetyltransferase complex, a multiprotein complex that mediates the majority of histone H4 acetylation at 'Lys-16' (H4K16ac), an epigenetic mark that prevents chromatin compaction. The protein is MSL complex subunit 3B of Mus musculus (Mouse).